We begin with the raw amino-acid sequence, 156 residues long: 17 kDa lipoprotein (156 aa).

The first 21 residues, 1–21 (MKGSVRALCAFLGVGALGSAL), serve as a signal peptide directing secretion. A lipid anchor (N-palmitoyl cysteine) is attached at Cys-22. A lipid anchor (S-diacylglycerol cysteine) is attached at Cys-22.

The protein localises to the cell membrane. The polypeptide is 17 kDa lipoprotein (tpp17) (Treponema pallidum (strain Nichols)).